The chain runs to 210 residues: MRCLTMPTLLRALAQAAHTGPPGGRTLHSSAVAATYKYVNMQESKTDMKSVTDRAARTLLWTELFRGLGMTLSYLFREPATINYPFEKGPLSPRFRGEHALRRYPSGEERCIACKLCEAVCPAQAITIEAEPRADGSRRTTRYDIDMTKCIYCGFCQEACPVDAIVEGPNFEFSTETHEELLYNKEKLLNNGDKWEAEIAANIQADYLYR.

The N-terminal 34 residues, 1-34, are a transit peptide targeting the mitochondrion; that stretch reads MRCLTMPTLLRALAQAAHTGPPGGRTLHSSAVAA. 4Fe-4S ferredoxin-type domains lie at 102 to 131 and 141 to 170; these read RRYP…IEAE and TRYD…EGPN. 8 residues coordinate [4Fe-4S] cluster: C111, C114, C117, C121, C150, C153, C156, and C160.

The protein belongs to the complex I 23 kDa subunit family. Core subunit of respiratory chain NADH dehydrogenase (Complex I) which is composed of 45 different subunits. This is a component of the iron-sulfur (IP) fragment of the enzyme. Interacts with RAB5IF. It depends on [4Fe-4S] cluster as a cofactor.

It localises to the mitochondrion inner membrane. It carries out the reaction a ubiquinone + NADH + 5 H(+)(in) = a ubiquinol + NAD(+) + 4 H(+)(out). Functionally, core subunit of the mitochondrial membrane respiratory chain NADH dehydrogenase (Complex I) which catalyzes electron transfer from NADH through the respiratory chain, using ubiquinone as an electron acceptor. Essential for the catalytic activity and assembly of complex I. This is NADH dehydrogenase [ubiquinone] iron-sulfur protein 8, mitochondrial (NDUFS8) from Macaca fascicularis (Crab-eating macaque).